The following is a 76-amino-acid chain: Large ribosomal subunit protein bL31 (76 aa).

4 residues coordinate Zn(2+): C16, C18, C36, and C39.

This sequence belongs to the bacterial ribosomal protein bL31 family. Type A subfamily. As to quaternary structure, part of the 50S ribosomal subunit. Requires Zn(2+) as cofactor.

Functionally, binds the 23S rRNA. The protein is Large ribosomal subunit protein bL31 of Syntrophobacter fumaroxidans (strain DSM 10017 / MPOB).